We begin with the raw amino-acid sequence, 114 residues long: Large ribosomal subunit protein eL31 (114 aa).

The protein belongs to the eukaryotic ribosomal protein eL31 family.

The protein is Large ribosomal subunit protein eL31 (RPL31) of Eremothecium gossypii (strain ATCC 10895 / CBS 109.51 / FGSC 9923 / NRRL Y-1056) (Yeast).